We begin with the raw amino-acid sequence, 278 residues long: Urease accessory protein UreD (278 aa).

It belongs to the UreD family. As to quaternary structure, ureD, UreF and UreG form a complex that acts as a GTP-hydrolysis-dependent molecular chaperone, activating the urease apoprotein by helping to assemble the nickel containing metallocenter of UreC. The UreE protein probably delivers the nickel.

It is found in the cytoplasm. Functionally, required for maturation of urease via the functional incorporation of the urease nickel metallocenter. The chain is Urease accessory protein UreD from Leptothrix cholodnii (strain ATCC 51168 / LMG 8142 / SP-6) (Leptothrix discophora (strain SP-6)).